Here is a 160-residue protein sequence, read N- to C-terminus: 6-hydroxypseudooxynicotine dehydrogenase complex subunit beta (160 aa).

One can recognise a 2Fe-2S ferredoxin-type domain in the interval 4 to 80; that stretch reads FRLTVEVNGV…NSRIETVESL (77 aa). 8 residues coordinate [2Fe-2S] cluster: Cys42, Cys47, Cys50, Cys62, Cys101, Cys104, Cys137, and Cys139.

As to quaternary structure, heterohexamer of 2 alpha (kdhA), 2 beta (kdhB) and 2 gamma (kdhC) subunit. Dimer of heterotrimers. [2Fe-2S] cluster serves as cofactor.

It carries out the reaction 6-hydroxypseudooxynicotine + A + H2O = 2,6-dihydroxypseudooxynicotine + AH2. It functions in the pathway alkaloid degradation; nicotine degradation. In terms of biological role, molybdo-flavoprotein enzyme complex involved in nicotine degradation. The subunit gamma (large subunit) contains the substrate-binding sites, the subunit alpha (medium subunit) binds FAD and the subunit beta (small subunit) has a 2Fe-2S ferredoxin-type domain which binds 2 2Fe-2S clusters. The protein is 6-hydroxypseudooxynicotine dehydrogenase complex subunit beta (kdhB) of Paenarthrobacter nicotinovorans (Arthrobacter nicotinovorans).